A 923-amino-acid polypeptide reads, in one-letter code: Inorganic phosphate transporter PHO87 (923 aa).

The SPX domain occupies 1 to 334; the sequence is MRFSHFLKYN…HMNTRQELIE (334 aa). Over 1–461 the chain is Extracellular; the sequence is MRFSHFLKYN…KLFFGKRAMK (461 aa). Disordered stretches follow at residues 40 to 74 and 86 to 107; these read ETPTGDLNDDADSQTPGPIADIESNIAAGEPSSSK and FGSKTPSGSKRGDSDEKAIDGN. A compositionally biased stretch (basic and acidic residues) spans 95 to 104; that stretch reads KRGDSDEKAI. Residue lysine 102 forms a Glycyl lysine isopeptide (Lys-Gly) (interchain with G-Cter in ubiquitin) linkage. Residues asparagine 162, asparagine 202, and asparagine 274 are each glycosylated (N-linked (GlcNAc...) asparagine). A helical membrane pass occupies residues 462-482; it reads IGFIIIVTGVLLGVKTFNDPV. Residues 483–493 are Cytoplasmic-facing; it reads EHRCMALVECC. A helical membrane pass occupies residues 494-514; sequence AFLWASEAIPLHITGLLVPLL. Residues 515 to 537 lie on the Extracellular side of the membrane; it reads TVLFRVLKDDDGKVMGAAAASTE. The chain crosses the membrane as a helical span at residues 538–558; sequence ILGTMWSSTIMILLAGFTLGE. Topologically, residues 559–583 are cytoplasmic; that stretch reads ALSQYNVAKVLASWLLALAGTKPRN. A helical transmembrane segment spans residues 584-604; the sequence is VLLMAMSVVFFLSMWISNVAS. Residues 605–627 are Extracellular-facing; it reads PVLTYSLLTPLLDPLDYTSPFAK. Residues 628–648 traverse the membrane as a helical segment; sequence ALVMGVALSADIGGMASPISS. The Cytoplasmic portion of the chain corresponds to 649 to 667; the sequence is PQNIISMQYLKPYGIGWGQ. The chain crosses the membrane as a helical span at residues 668 to 688; it reads FFAVALPTGILSMLCSWALMI. Over 689–707 the chain is Extracellular; that stretch reads LTFKIGKTKLEKFKPIRTR. The chain crosses the membrane as a helical span at residues 708-728; sequence FTIKQYFIIIVTIATILLWCV. Residues 729 to 735 lie on the Cytoplasmic side of the membrane; that stretch reads ESQIESA. A helical transmembrane segment spans residues 736–756; it reads FGSSGEIAVIPIVLFFGTGLL. Residues 757–767 lie on the Extracellular side of the membrane; it reads STKDFNTFPWS. Residues 768 to 788 form a helical membrane-spanning segment; that stretch reads IVVLAMGGIALGKAVSSSGLL. Topologically, residues 789-802 are cytoplasmic; the sequence is VTIARALQKKIQND. Residues 803–823 form a helical membrane-spanning segment; the sequence is GVFAILCIFGILMLVVGTFVS. Over 824-849 the chain is Extracellular; that stretch reads HTVSAIIIIPLVQEVGDKLSDPKAAP. A helical membrane pass occupies residues 850 to 870; sequence ILVFGCALLASCGMGLASSGF. At 871-898 the chain is on the cytoplasmic side; sequence PNVTAISMTDKKGNRWLTVGAFISRGVP. Residues 899 to 919 form a helical membrane-spanning segment; sequence ASLLAFVCVITLGYGISSSVL. The Extracellular portion of the chain corresponds to 920 to 923; sequence KGST.

It belongs to the CitM (TC 2.A.11) transporter family.

Its subcellular location is the membrane. In terms of biological role, involved in the uptake of inorganic phosphate. The polypeptide is Inorganic phosphate transporter PHO87 (PHO87) (Saccharomyces cerevisiae (strain ATCC 204508 / S288c) (Baker's yeast)).